A 235-amino-acid chain; its full sequence is Aspartate/glutamate leucyltransferase (235 aa).

It belongs to the R-transferase family. Bpt subfamily.

It localises to the cytoplasm. It carries out the reaction N-terminal L-glutamyl-[protein] + L-leucyl-tRNA(Leu) = N-terminal L-leucyl-L-glutamyl-[protein] + tRNA(Leu) + H(+). The catalysed reaction is N-terminal L-aspartyl-[protein] + L-leucyl-tRNA(Leu) = N-terminal L-leucyl-L-aspartyl-[protein] + tRNA(Leu) + H(+). Functionally, functions in the N-end rule pathway of protein degradation where it conjugates Leu from its aminoacyl-tRNA to the N-termini of proteins containing an N-terminal aspartate or glutamate. This chain is Aspartate/glutamate leucyltransferase, found in Pseudomonas fluorescens (strain SBW25).